The sequence spans 118 residues: Cell division protein FtsB (118 aa).

At 1-3 (MRL) the chain is on the cytoplasmic side. A helical transmembrane segment spans residues 4–21 (LFLVLLVLLGLIQYPLWL). Topologically, residues 22 to 118 (GKGGWFKVWD…PRPPATPPRR (97 aa)) are periplasmic. Residues 28–62 (KVWDLQRQVAEQRETNDGLRARNTALEAEVRDLAT) adopt a coiled-coil conformation. The tract at residues 88–118 (LPPGTPLPSDNSTPQASALSKPRPPATPPRR) is disordered. The span at 95–105 (PSDNSTPQASA) shows a compositional bias: polar residues. The segment covering 109-118 (PRPPATPPRR) has biased composition (pro residues).

Belongs to the FtsB family. In terms of assembly, part of a complex composed of FtsB, FtsL and FtsQ.

The protein resides in the cell inner membrane. Its function is as follows. Essential cell division protein. May link together the upstream cell division proteins, which are predominantly cytoplasmic, with the downstream cell division proteins, which are predominantly periplasmic. The chain is Cell division protein FtsB from Bordetella bronchiseptica (strain ATCC BAA-588 / NCTC 13252 / RB50) (Alcaligenes bronchisepticus).